The chain runs to 657 residues: UvrABC system protein B (657 aa).

The Helicase ATP-binding domain maps to 23–414 (KSIKKGNKYQ…KENIFHQIMR (392 aa)). Residue 36–43 (GVTGSGKT) coordinates ATP. A Beta-hairpin motif is present at residues 89 to 112 (YYDYYQPEAYIPRTDVFIEKDSST). Positions 431–593 (QVEILFDEAK…ITPTSVKRHI (163 aa)) constitute a Helicase C-terminal domain. The UVR domain occupies 622-657 (AKLVKELRKQMLEAAKALEFEKAAAIRDEINKLRDL).

Belongs to the UvrB family. Forms a heterotetramer with UvrA during the search for lesions. Interacts with UvrC in an incision complex.

The protein resides in the cytoplasm. Its function is as follows. The UvrABC repair system catalyzes the recognition and processing of DNA lesions. A damage recognition complex composed of 2 UvrA and 2 UvrB subunits scans DNA for abnormalities. Upon binding of the UvrA(2)B(2) complex to a putative damaged site, the DNA wraps around one UvrB monomer. DNA wrap is dependent on ATP binding by UvrB and probably causes local melting of the DNA helix, facilitating insertion of UvrB beta-hairpin between the DNA strands. Then UvrB probes one DNA strand for the presence of a lesion. If a lesion is found the UvrA subunits dissociate and the UvrB-DNA preincision complex is formed. This complex is subsequently bound by UvrC and the second UvrB is released. If no lesion is found, the DNA wraps around the other UvrB subunit that will check the other stand for damage. The protein is UvrABC system protein B of Campylobacter jejuni subsp. jejuni serotype O:2 (strain ATCC 700819 / NCTC 11168).